We begin with the raw amino-acid sequence, 1898 residues long: MTPEPAPGRTMVPLVPALVMLGLVAGAHGDSKPVFVKVPEDQTGLSGGVASFVCQATGEPKPRITWMKKGKKVSSQRFEVIEFDDGAGSVLRIQPLRVQRDEAIYECTATNSLGEINTSAKLSVLEEEQLPLGFPSIDMGPQLKVVEKARTATMLCAAGGNPDPEISWFKDFLPVDPAASNGRIKQLRSGALQIESSEESDQGKYECVATNSAGTRYSAPANLYVRVRRVAPRFSIPPSSQEVMPGGSVNLTCVAVGAPMPYVKWMMGAEELTKEDEMPVGRNVLELSNVVRSANYTCVAISSLGMIEATAQVTVKALPKPPIDLVVTETTATSVTLTWDSGNSEPVSYYGIQYRPAGAEGPFQEVDGVATTRYSIGGLSPFSEYAFRVLAVNSIGRGPPSEAVRARTGEQAPSSPPRRVQARMLSASTMLVQWEPPEEPNGLVRGYRVYYTPDSRRPLSAWHKHNTDAGLLTTVGSLLPGITYSLRVLAFTAVGDGPPSPTIQVKTQQGVPAQPADFQAEVDSDTRIQLSWLLPPQERIVKYELVYWAAEDEGQQHKVTFDPTSSYTVEDLKPDTLYRFQLAARSELGVGVFTPTIEARTAQSTPSAPPQKVTCVSVGSTTVRVSWVPPPADSRNGVITQYSVAYEAVDGEDRGRHVVDGIGREHSSWDLVGLEKWTEYRVWVRAHTDVGPGPESSPVLVRTDEDVPSGPPRKVEVEPLNSTAVRVSWKLPVPSKQHGQIRGYQVTYVRLENGEPRGAPIIQDVMLAEAQETTISGLTPETTYSITVAAYTTKGDGARSKPKIVTTTGAVPGRPTMMVSTTAMNTALLQWHPPKELPGELLGYRLQYRRADEARPSTIDFGKDDQHFTVTGLHKGATYIFRLTAKNRAGLGEEFEKEITTPEDVPSGFPQNLRVIGLTTSTTELIWDPPVLAERNGRITNYTVVYRDINSQQELQNVTADTHLTLSGLKPDTTYDIKVRARTSKGAGPLSPSIQSRTMPVEQVFAKNFRVEAAMKTSVLLSWEVPDSYKSAVPFRILYNGQSVEVDGHSMRKLIADLQPNTEYSFVLMNRGSSAGGLQHLVSIRTAPDLLPHKPLPASAYIEDGRFTLTMPRVQEPALVRWFYIMVVPIDRMGGSMLAPQWSTPEELELDELLEAIEQGGGERLRRRRQTERLKPYVAAQVDVLPETFTLGDKKNYQGFYNRPLSPDLSYQCFVLASLKEPVDQKRYACSPYSDEIVVQVTPAQQQEEPELLWVTGPVLAVILIVLIVIAILLFKRKRTHSPSSKDEQSIGLKDSLLAHSSDPVEMRRLNYQTPGMRDHPPIPITDLADNIERLKANDGLKFSQEYESIDPGQQFTWENSNLEVNKPKNRYANVIAYDHSRVILTSIDGVPGSDYINANYIDGYRKQNAYIATQGPLPETMGDFWRMVWEQRTATVVMMTRLEEKSRVKCDQYWPARGTETYGLIQVTLLDTVELATYTVRTFALYKSGSSEKRELRQFQFMAWPDHGVPEYPTPILAFLRRVKACNPLDAGPMVVHCSAGVGRTGCFIVIDAMLERMKHEKTVDIYGHVTCMRAQRNYMVQTEDQYVFIHEALLEAAMCGHTEVPARNLYAHIQKLGQVPPGESVTAMELEFKLLANSKAHTSRFISANLPCNKFKNRLVNIMPYELTRVCLQPIRGVEGSDYINASFLDGYRQQKAYIATQGPLAESTEDFWRMLWEHNSTIIVMLTRLREMGREKCHQYWPAERSARYQYFVVDPMAEYNMPQYILREFKVTDARDGQSRTIRQFQFTDWPEQGVPKTGEGFIDFIGQVHKTKEQFGQDGPITVHCSAGVGRTGVFITLSIVLERMRYEGVVDMFQTVKTLRTQRPAMVQTEDQYQLCYRAALEYLGSFDHYAT.

A signal peptide spans 1–29 (MTPEPAPGRTMVPLVPALVMLGLVAGAHG). Residues 30-1254 (DSKPVFVKVP…QQQEEPELLW (1225 aa)) lie on the Extracellular side of the membrane. 3 consecutive Ig-like C2-type domains span residues 33–123 (PVFV…AKLS), 135–224 (PSID…ANLY), and 232–314 (PRFS…AQVT). A disulfide bond links Cys54 and Cys107. 68-77 (KKGKKVSSQR) serves as a coordination point for heparin. Asn117 is a glycosylation site (N-linked (GlcNAc...) asparagine). A disulfide bond links Cys156 and Cys207. Residues Asn250 and Asn295 are each glycosylated (N-linked (GlcNAc...) asparagine). A disulfide bond links Cys253 and Cys298. 8 Fibronectin type-III domains span residues 321–411 (PPID…TGEQ), 416–510 (PPRR…TQQG), 514–604 (QPAD…TAQS), 609–706 (PPQK…TDED), 711–810 (PPRK…TTGA), 811–905 (VPGR…PEDV), 909–1001 (FPQN…TMPV), and 1005–1089 (FAKN…TAPD). The disordered stretch occupies residues 399–418 (PPSEAVRARTGEQAPSSPPR). The tract at residues 693–713 (GPESSPVLVRTDEDVPSGPPR) is disordered. N-linked (GlcNAc...) asparagine glycosylation occurs at Asn721. Residues Asn941 and Asn957 are each glycosylated (N-linked (GlcNAc...) asparagine). The helical transmembrane segment at 1255-1275 (VTGPVLAVILIVLIVIAILLF) threads the bilayer. The Cytoplasmic portion of the chain corresponds to 1276–1898 (KRKRTHSPSS…YLGSFDHYAT (623 aa)). Ser1296 bears the Phosphoserine mark. 2 Tyrosine-protein phosphatase domains span residues 1343-1598 (FSQE…LLEA) and 1630-1889 (MELE…ALEY). Substrate is bound by residues Asp1507, 1539–1545 (CSAGVGR), and Gln1583. The Phosphocysteine intermediate role is filled by Cys1539. The active-site Phosphocysteine intermediate is the Cys1830.

This sequence belongs to the protein-tyrosine phosphatase family. Receptor class 2A subfamily. Interacts with GRIP1. Interacts with PPFIA1, PPFIA2 and PPFIA3. Interacts with INSR.

Its subcellular location is the membrane. It catalyses the reaction O-phospho-L-tyrosyl-[protein] + H2O = L-tyrosyl-[protein] + phosphate. Functionally, possible cell adhesion receptor. It possesses an intrinsic protein tyrosine phosphatase activity (PTPase) and dephosphorylates EPHA2 regulating its activity. Its function is as follows. The first PTPase domain has enzymatic activity, while the second one seems to affect the substrate specificity of the first one. This is Receptor-type tyrosine-protein phosphatase F (PTPRF) from Bos taurus (Bovine).